Reading from the N-terminus, the 188-residue chain is dCTP deaminase (188 aa).

Residues 111–116 (KSTYAR), 135–137 (TLE), Gln156, Tyr170, and Gln180 contribute to the dCTP site. Residue Glu137 is the Proton donor/acceptor of the active site.

Belongs to the dCTP deaminase family. In terms of assembly, homotrimer.

The enzyme catalyses dCTP + H2O + H(+) = dUTP + NH4(+). It functions in the pathway pyrimidine metabolism; dUMP biosynthesis; dUMP from dCTP (dUTP route): step 1/2. In terms of biological role, catalyzes the deamination of dCTP to dUTP. This chain is dCTP deaminase, found in Pseudomonas putida (strain GB-1).